A 390-amino-acid polypeptide reads, in one-letter code: L-serine phosphate decarboxylase Cj1436c (390 aa).

Position 243 is an N6-(pyridoxal phosphate)lysine (Lys243).

Belongs to the class-I pyridoxal-phosphate-dependent aminotransferase family. Pyridoxal 5'-phosphate serves as cofactor.

The enzyme catalyses O-phospho-L-serine + H(+) = phosphoethanolamine + CO2. The protein operates within capsule biogenesis; capsule polysaccharide biosynthesis. Functionally, pyridoxal phosphate (PLP)-dependent decarboxylase involved in the biosynthesis of amidated D-glucuronic acid structures found on the capsular polysaccharide (CPS) of C.jejuni. Catalyzes the decarboxylation of L-serine phosphate to ethanolamine phosphate. Less active with L-threonine phosphate. No activity with L-serine, L-threonine, L-aspartate or L-glutamate. The sequence is that of L-serine phosphate decarboxylase Cj1436c from Campylobacter jejuni subsp. jejuni serotype O:2 (strain ATCC 700819 / NCTC 11168).